Here is a 2065-residue protein sequence, read N- to C-terminus: Cytoskeleton-associated protein 5-A (2065 aa).

TOG regions lie at residues 1-240 (MGDD…DLKA) and 264-515 (VDAY…KETK). 7 HEAT repeats span residues 120–157 (EKAEVVQEELLKGLDNKNPKIVVACVETVRKALSEFGS), 160–197 (MTLKPIIKVLPKLFESREKAIRDEAKLLAVEIYRWIRD), 270–311 (LEAV…NPKI), 314–352 (GDFADLVKALKTVVGKDTNVMLVALAAKCIAGLAAGLRK), 356–393 (SYAGHIVPTILEKFKEKKPQVVQALQEAIDAVFLTTTL), 395–432 (NISEDVLAVMDNKNPAIKQQTSLFLARSFRHCTPSTLP), and 436–477 (LKPF…VNPF). The interval 500-574 (NGKKGGAAAG…GATAKGKKAV (75 aa)) is disordered. Low complexity predominate over residues 538–568 (KAAAAPKKAPAAKPGGPVKKAKAPASSGATA). The segment at 644-808 (KPGFKETNFQ…LSQIDAEFEK (165 aa)) is TOG 3. HEAT repeat units lie at residues 652-689 (FQVMQMKLHIVALIAQKGNFSKTSACAVLDGLVDKVGD) and 748-785 (INVKAFISNVKTALAATNPAIRTSAITLLGVMYLYMGA). The tract at residues 809 to 849 (MKGQTPPVSIRGSKHGSGRDEGEEGEEQDEDAPADVTDLLP) is disordered. Over residues 829–841 (EGEEGEEQDEDAP) the composition is skewed to acidic residues. The segment at 846–1090 (DLLPRTDISD…AGPPGKASSK (245 aa)) is TOG 4. HEAT repeat units follow at residues 852 to 889 (DISDKISSDLVSKIEDKNWKIRKEGLDEVTAIINEAKF), 892 to 929 (PSIGELPSALKGRLNDSNKILVQQTLTILQQLSTAMGH), 933 to 970 (QHVKNLGMPIITVLGDSKANVRAAALGTLKSWVDQTGM), and 1015 to 1052 (CVPYLYNCLEDRNGDVRKKAQEALPIFMMHIGFEKMSK). Residues 1074–1115 (ASMPAKPAGPPGKASSKQPPAVAQASASPPPAASSDSGSSTS) are compositionally biased toward low complexity. The disordered stretch occupies residues 1074-1192 (ASMPAKPAGP…AKDEEDKSGP (119 aa)). Residues 1126–1163 (PGTQASKAKTQSVSSEGNTSLNPSNTSLTPSKANTSLS) show a composition bias toward polar residues. The tract at residues 1150–1235 (NTSLTPSKAN…IEQLKTQMSP (86 aa)) is interaction with microtubule lattice. Residues 1191-1460 (GPIYIIVPNG…ERIKRAGKKQ (270 aa)) are TOG 5. HEAT repeat units lie at residues 1251–1288 (QRQIKGLAVMTEHLESEKEGVISCLDLVLKWFTLRFFD), 1295–1318 (MKCLEYLKLLFIMLSQEEYHLTEM), 1319–1355 (EGTSFLPYLMLKVGEPKDIVRKDVRAILTKMCQVYPA), 1357–1390 (KMFNFVMEGTKSKNSKQRAECLEELGCLVESYGM), and 1395–1432 (PTPAKALKEIAIHIGDRDTTVRNAALNTIVTVYNVHGE). Disordered stretches follow at residues 1982–2001 (DNAKQDERPPLTSLLSKSSA) and 2028–2065 (VELDSNQTYPSTTTSSSASSTNIDDLKKRLERIKSSRK). Positions 2002–2065 (PAVVSSTDML…RLERIKSSRK (64 aa)) are interaction with tacc3. Residues 2038–2048 (STTTSSSASST) show a composition bias toward low complexity. A compositionally biased stretch (basic and acidic residues) spans 2051 to 2065 (DDLKKRLERIKSSRK).

Belongs to the TOG/XMAP215 family. As to quaternary structure, interacts with tacc3; two molecules of ckap5 interact with 1 molecule of tacc3 probably mediated by coiled coil domains forming a four-helix bundle. Interacts with tacc3 and clathrin forming the TACC3/ch-TOG/clathrin complex located at spindle inter-microtubules bridges. Interacts with ndc80; indicative for an association with the NDC80 comnplex.

It is found in the cytoplasm. It localises to the cytoskeleton. Its subcellular location is the spindle pole. The protein resides in the spindle. The protein localises to the microtubule organizing center. It is found in the centrosome. It localises to the chromosome. Its subcellular location is the centromere. The protein resides in the kinetochore. Binds to the plus end of microtubules and regulates microtubule dynamics and microtubule organization. Acts as a processive microtubule polymerase. Promotes cytoplasmic microtubule nucleation and elongation. Plays a major role in organizing spindle poles. In spindle formation protects kinetochore microtubules from depolymerization by kif2c and has an essential role in centrosomal microtubule assembly independently of kif2c activity. Contributes to centrosome integrity. Acts as a component of the TACC3/ch-TOG/clathrin complex proposed to contribute to stabilization of kinetochore fibers of the mitotic spindle by acting as inter-microtubule bridge. Enhances the strength of NDC80 complex-mediated kinetochore-tip microtubule attachments. This chain is Cytoskeleton-associated protein 5-A (ckap5-a), found in Xenopus laevis (African clawed frog).